The chain runs to 382 residues: S-adenosylmethionine synthase (382 aa).

Residue His-14 coordinates ATP. Position 16 (Asp-16) interacts with Mg(2+). Glu-42 contributes to the K(+) binding site. Residues Glu-55 and Gln-91 each coordinate L-methionine. The segment at 91-101 (QSENIAMGVNL) is flexible loop. ATP-binding positions include 156–158 (DMK), 222–223 (KF), Asp-231, 237–238 (RK), Ala-254, and Lys-258. Position 231 (Asp-231) interacts with L-methionine. Lys-262 is a binding site for L-methionine.

It belongs to the AdoMet synthase family. Homotetramer; dimer of dimers. It depends on Mg(2+) as a cofactor. Requires K(+) as cofactor.

It is found in the cytoplasm. The enzyme catalyses L-methionine + ATP + H2O = S-adenosyl-L-methionine + phosphate + diphosphate. It functions in the pathway amino-acid biosynthesis; S-adenosyl-L-methionine biosynthesis; S-adenosyl-L-methionine from L-methionine: step 1/1. Catalyzes the formation of S-adenosylmethionine (AdoMet) from methionine and ATP. The overall synthetic reaction is composed of two sequential steps, AdoMet formation and the subsequent tripolyphosphate hydrolysis which occurs prior to release of AdoMet from the enzyme. This Mycoplasmopsis synoviae (strain 53) (Mycoplasma synoviae) protein is S-adenosylmethionine synthase.